A 163-amino-acid polypeptide reads, in one-letter code: uncharacterized protein (163 aa).

A helical transmembrane segment spans residues 7–23 (TLVAFIATFFNLAATSI).

Its subcellular location is the membrane. This is an uncharacterized protein from Saccharomyces cerevisiae (strain ATCC 204508 / S288c) (Baker's yeast).